A 92-amino-acid chain; its full sequence is Putative regulatory protein CKL_1364 (92 aa).

Belongs to the RemA family.

The sequence is that of Putative regulatory protein CKL_1364 from Clostridium kluyveri (strain ATCC 8527 / DSM 555 / NBRC 12016 / NCIMB 10680 / K1).